We begin with the raw amino-acid sequence, 450 residues long: Serine--tRNA ligase, cytoplasmic (450 aa).

An L-serine-binding site is contributed by 238–240 (TSE). ATP is bound by residues 271–273 (RRE) and V287. L-serine is bound at residue E294. 358-361 (ELVS) is a binding site for ATP. T396 lines the L-serine pocket.

This sequence belongs to the class-II aminoacyl-tRNA synthetase family. Type-1 seryl-tRNA synthetase subfamily. In terms of assembly, homodimer. The tRNA molecule binds across the dimer.

It is found in the cytoplasm. The protein resides in the cytosol. It catalyses the reaction tRNA(Ser) + L-serine + ATP = L-seryl-tRNA(Ser) + AMP + diphosphate + H(+). In terms of biological role, catalyzes the attachment of serine to tRNA(Ser) in a two-step reaction: serine is first activated by ATP to form Ser-AMP and then transferred to the acceptor end of tRNA(Ser). This chain is Serine--tRNA ligase, cytoplasmic, found in Schizosaccharomyces pombe (strain 972 / ATCC 24843) (Fission yeast).